The following is a 782-amino-acid chain: Anoctamin-9 (782 aa).

The Cytoplasmic segment spans residues 1-198; that stretch reads MQGEESLRIL…LYFVWLGWYT (198 aa). The helical transmembrane segment at 199-219 threads the bilayer; the sequence is YMLVPAALTGLLVFLSGFSLF. The Extracellular segment spans residues 220–264; sequence EASQISKEICEAHDILMCPLGDHSRRYQRLSETCTFAKLTHLFDN. Phosphoserine; by PKA is present on Ser-250. A helical transmembrane segment spans residues 265–285; sequence DGTVVFAIFMALWATVFLEIW. The Cytoplasmic segment spans residues 286 to 331; sequence KRQRARVVLHWDLYVWDEEQEEMALQLINCPDYKLRPYQHSYLRST. The helical transmembrane segment at 332–352 threads the bilayer; that stretch reads VILVLTLLMICLMIGMAHVLV. At 353–373 the chain is on the extracellular side; sequence VYRVLASALFSSSAVPFLEEQ. Residues 374 to 394 form a helical membrane-spanning segment; that stretch reads VTTAVVVTGALVHYVTIIIMT. The Cytoplasmic segment spans residues 395 to 423; the sequence is KINRCVALKLCDFEMPRTFSERESRFTIR. The chain crosses the membrane as a helical span at residues 424–444; the sequence is FFTLQFFTHFSSLIYIAFILG. Topologically, residues 445–552 are extracellular; the sequence is RINGHPGKST…EMMIQYGFTT (108 aa). The chain crosses the membrane as a helical span at residues 553–573; that stretch reads IFVAAFPLAPLLALFSNLVEI. At 574–604 the chain is on the cytoplasmic side; that stretch reads RLDAIKMVWLQRRLVPRKAKDIGTWLQVLET. The chain crosses the membrane as a helical span at residues 605 to 625; that stretch reads IGVLAVIANGMVIAFTSEFIP. Residues 626–703 lie on the Extracellular side of the membrane; it reads RVVYKYRYSP…QFWFLLAIRL (78 aa). 4 N-linked (GlcNAc...) asparagine glycosylation sites follow: Asn-641, Asn-652, Asn-674, and Asn-690. Residues 704 to 724 form a helical membrane-spanning segment; the sequence is AFVILFEHVALCIKLIAAWFV. Residues 725–782 are Cytoplasmic-facing; the sequence is PDIPQSVKNKVLEVKYQRLREKMWHGRQRLGGVGAGSRPPMPAHPTPASIFSARSTDV. The disordered stretch occupies residues 756–782; that stretch reads GVGAGSRPPMPAHPTPASIFSARSTDV.

Belongs to the anoctamin family. Phosphorylated on serine residues by cAMP-dependent protein kinase A (PKA) which is essential for activation of its cation channel activity. Expressed in the kidney. Expressed in the olfactory epithelium.

The protein localises to the cell membrane. The protein resides in the endoplasmic reticulum. The catalysed reaction is a 1,2-diacyl-sn-glycero-3-phospho-L-serine(in) = a 1,2-diacyl-sn-glycero-3-phospho-L-serine(out). It catalyses the reaction a beta-D-galactosyl-(1&lt;-&gt;1')-N-acylsphing-4-enine(out) = a beta-D-galactosyl-(1&lt;-&gt;1')-N-acylsphing-4-enine(in). It carries out the reaction a 1,2-diacyl-sn-glycero-3-phosphocholine(in) = a 1,2-diacyl-sn-glycero-3-phosphocholine(out). The enzyme catalyses Ca(2+)(in) = Ca(2+)(out). The catalysed reaction is Na(+)(in) = Na(+)(out). It catalyses the reaction K(+)(in) = K(+)(out). Its activity is regulated as follows. Cation channel activity is activated via phosphorylation on serine residues by cAMP-dependent protein kinase A (PKA). PKA-activated nonselective cation channel. Discriminates poorly among cations but is more permeable to Ca(2+) ions than to monovalent cations. Acts as a calcium-activated calcium permeable channel which may operate as a endoplasmic reticulum (ER) Ca(2+)-leak channel, reducing the loading of the ER Ca(2+) store. Regulates intracellular Ca2+ signals, ion channel activity, and cytokine release in the renal tissue. Plays an important role in olfaction, amplifying cAMP-evoked cyclic nucleotide-gated (CNG) channel currents in the olfactory sensory neurons. Has calcium-dependent phospholipid scramblase activity; scrambles phosphatidylserine, phosphatidylcholine and galactosylceramide. Does not exhibit calcium-activated chloride channel (CaCC) activity. Can inhibit the activity of ANO1. The protein is Anoctamin-9 (ANO9) of Homo sapiens (Human).